The chain runs to 307 residues: Ribulose bisphosphate carboxylase/oxygenase activase, chloroplastic (307 aa).

The transit peptide at 1-46 (MSIPDDKEAGTIDEFLQKEGVLDILQKLDHDLVGLKPVKDRVREIA) directs the protein to the chloroplast. 73–80 (GSPGTGKT) serves as a coordination point for ATP.

Belongs to the CbxX/CfxQ family. Forms homooligomers. Forms heterohexameric rings with the plastid-encoded Rca subunit consisting of 3 of each nuclear- and plastidial-encoded subunits that alternate in the ring.

Its subcellular location is the plastid. The protein resides in the chloroplast. Functionally, required for the expression of ribulose 1,5-bisphosphate carboxylase/oxygenase (RuBisCo). ATPase involved in the activation of red-type RuBisCo, which tends to form inactive complexes with its substrate ribulose 1,5-bisphosphate (RuBP). Catalyzes the release of RuBP from inhibited RuBisCo in an ATP-dependent manner. Activation of RuBisCO involves the ATP-dependent carboxylation of the epsilon-amino group of lysine leading to a carbamate structure. The nuclear-encoded subunit plays a more critical role in activase function than the plastidial-encoded subunit. This is Ribulose bisphosphate carboxylase/oxygenase activase, chloroplastic from Cyanidioschyzon merolae (strain NIES-3377 / 10D) (Unicellular red alga).